Consider the following 125-residue polypeptide: Bublin coiled-coil protein (125 aa).

The stretch at 46 to 95 (IRKLDTQLDHLNDYMSKMEERLKAHNDRMMETLKQQKEEREKRRRSFHER) forms a coiled coil. The segment at 79-125 (KQQKEEREKRRRSFHERMSQNQSEDEEFKKQMSSILKRVQSVKRTEK) is disordered.

As to expression, expressed in many epithelial tissues, including the pharynx, intestine, excretory canal and hypodermis.

It is found in the cell junction. It localises to the cytoplasm. Its subcellular location is the cytoskeleton. Dynamic component of the endotube in intestinal cells, interacts with intermediate filament and regulates intestinal lumen morphology. The chain is Bublin coiled-coil protein from Caenorhabditis elegans.